Here is a 790-residue protein sequence, read N- to C-terminus: Lon protease (790 aa).

Positions 23-220 (LPIMPIFHTV…EITLIVNHQL (198 aa)) constitute a Lon N-terminal domain. 372–379 (GPPGTGKT) lines the ATP pocket. The 182-residue stretch at 608-789 (ISKPGIAMGL…REVLNIALSR (182 aa)) folds into the Lon proteolytic domain. Active-site residues include Ser695 and Lys738.

It belongs to the peptidase S16 family. As to quaternary structure, homohexamer. Organized in a ring with a central cavity.

It localises to the cytoplasm. It catalyses the reaction Hydrolysis of proteins in presence of ATP.. ATP-dependent serine protease that mediates the selective degradation of mutant and abnormal proteins as well as certain short-lived regulatory proteins. Required for cellular homeostasis and for survival from DNA damage and developmental changes induced by stress. Degrades polypeptides processively to yield small peptide fragments that are 5 to 10 amino acids long. Binds to DNA in a double-stranded, site-specific manner. The polypeptide is Lon protease (Syntrophus aciditrophicus (strain SB)).